The following is a 448-amino-acid chain: Trigger factor (448 aa).

The 86-residue stretch at 172-257 folds into the PPIase FKBP-type domain; that stretch reads GDRVTVDFVG…MKKIEWPHLP (86 aa).

It belongs to the FKBP-type PPIase family. Tig subfamily.

It is found in the cytoplasm. It carries out the reaction [protein]-peptidylproline (omega=180) = [protein]-peptidylproline (omega=0). Its function is as follows. Involved in protein export. Acts as a chaperone by maintaining the newly synthesized protein in an open conformation. Functions as a peptidyl-prolyl cis-trans isomerase. The polypeptide is Trigger factor (Burkholderia cenocepacia (strain HI2424)).